The chain runs to 294 residues: Pyridoxal 5'-phosphate synthase subunit PdxS (294 aa).

Asp24 provides a ligand contact to D-ribose 5-phosphate. Lys81 acts as the Schiff-base intermediate with D-ribose 5-phosphate in catalysis. Gly153 contributes to the D-ribose 5-phosphate binding site. Arg165 is a D-glyceraldehyde 3-phosphate binding site. D-ribose 5-phosphate contacts are provided by residues Gly214 and 235-236 (GS).

Belongs to the PdxS/SNZ family. In terms of assembly, in the presence of PdxT, forms a dodecamer of heterodimers.

The enzyme catalyses aldehydo-D-ribose 5-phosphate + D-glyceraldehyde 3-phosphate + L-glutamine = pyridoxal 5'-phosphate + L-glutamate + phosphate + 3 H2O + H(+). It functions in the pathway cofactor biosynthesis; pyridoxal 5'-phosphate biosynthesis. In terms of biological role, catalyzes the formation of pyridoxal 5'-phosphate from ribose 5-phosphate (RBP), glyceraldehyde 3-phosphate (G3P) and ammonia. The ammonia is provided by the PdxT subunit. Can also use ribulose 5-phosphate and dihydroxyacetone phosphate as substrates, resulting from enzyme-catalyzed isomerization of RBP and G3P, respectively. The polypeptide is Pyridoxal 5'-phosphate synthase subunit PdxS (Bacillus licheniformis (strain ATCC 14580 / DSM 13 / JCM 2505 / CCUG 7422 / NBRC 12200 / NCIMB 9375 / NCTC 10341 / NRRL NRS-1264 / Gibson 46)).